A 230-amino-acid chain; its full sequence is MAGKRLLEQRARVERERLYSPREALELLKELDGARFDETVEAHVHLNVDPRRADQMVRGTLMLPNGTGKTRRVAVFAVGEKAREAEEAGADIVGSEELAARIQNEGFMDFDVAVATPDQMSIVGRLGPILGPRGLMPNPKSGTVTMDVGRAVEEIKRGKVEYRVDRYGIIHTVLGKKSFDVDSLLENYFALREELVRARPAAVKGRYIKSVAFTTTMGPSVKVDPSVERE.

Belongs to the universal ribosomal protein uL1 family. As to quaternary structure, part of the 50S ribosomal subunit.

Functionally, binds directly to 23S rRNA. The L1 stalk is quite mobile in the ribosome, and is involved in E site tRNA release. In terms of biological role, protein L1 is also a translational repressor protein, it controls the translation of the L11 operon by binding to its mRNA. In Rubrobacter xylanophilus (strain DSM 9941 / JCM 11954 / NBRC 16129 / PRD-1), this protein is Large ribosomal subunit protein uL1.